A 370-amino-acid polypeptide reads, in one-letter code: Histidinol-phosphate aminotransferase 1 (370 aa).

An N6-(pyridoxal phosphate)lysine modification is found at lysine 222.

This sequence belongs to the class-II pyridoxal-phosphate-dependent aminotransferase family. Histidinol-phosphate aminotransferase subfamily. Homodimer. It depends on pyridoxal 5'-phosphate as a cofactor.

The catalysed reaction is L-histidinol phosphate + 2-oxoglutarate = 3-(imidazol-4-yl)-2-oxopropyl phosphate + L-glutamate. The protein operates within amino-acid biosynthesis; L-histidine biosynthesis; L-histidine from 5-phospho-alpha-D-ribose 1-diphosphate: step 7/9. The protein is Histidinol-phosphate aminotransferase 1 of Bacillus cereus (strain ZK / E33L).